We begin with the raw amino-acid sequence, 204 residues long: Large ribosomal subunit protein eL15 (204 aa).

Belongs to the eukaryotic ribosomal protein eL15 family. In terms of assembly, component of the large ribosomal subunit.

It localises to the cytoplasm. Functionally, component of the large ribosomal subunit. The ribosome is a large ribonucleoprotein complex responsible for the synthesis of proteins in the cell. This Anguilla japonica (Japanese eel) protein is Large ribosomal subunit protein eL15 (rpl15).